A 616-amino-acid chain; its full sequence is UPF0329 protein ECU02_1540 (616 aa).

Basic and acidic residues-rich tracts occupy residues 350–359 (EREKREESKG) and 369–381 (GAGEAKEESKEED). Residues 350–427 (EREKREESKG…RKGDGHHYKI (78 aa)) form a disordered region. The segment covering 382–396 (GKEEEGVEAEEEESA) has biased composition (acidic residues). A compositionally biased stretch (basic residues) spans 408–427 (ARRKKSLKGKRKGDGHHYKI).

It belongs to the UPF0329 family.

This is UPF0329 protein ECU02_1540 from Encephalitozoon cuniculi (strain GB-M1) (Microsporidian parasite).